The chain runs to 548 residues: Chaperonin GroEL (548 aa).

Residues 30–33, K51, 87–91, G415, and D495 each bind ATP; these read TLGP and DGTTT.

The protein belongs to the chaperonin (HSP60) family. As to quaternary structure, forms a cylinder of 14 subunits composed of two heptameric rings stacked back-to-back. Interacts with the co-chaperonin GroES.

It is found in the cytoplasm. It catalyses the reaction ATP + H2O + a folded polypeptide = ADP + phosphate + an unfolded polypeptide.. Together with its co-chaperonin GroES, plays an essential role in assisting protein folding. The GroEL-GroES system forms a nano-cage that allows encapsulation of the non-native substrate proteins and provides a physical environment optimized to promote and accelerate protein folding. This is Chaperonin GroEL from Yersinia pseudotuberculosis serotype O:1b (strain IP 31758).